A 148-amino-acid chain; its full sequence is Urease accessory protein UreE (148 aa).

Belongs to the UreE family.

It is found in the cytoplasm. Its function is as follows. Involved in urease metallocenter assembly. Binds nickel. Probably functions as a nickel donor during metallocenter assembly. In Geobacillus kaustophilus (strain HTA426), this protein is Urease accessory protein UreE.